A 389-amino-acid polypeptide reads, in one-letter code: Chalcone synthase 1 (389 aa).

Residue cysteine 164 is part of the active site.

Belongs to the thiolase-like superfamily. Chalcone/stilbene synthases family.

The catalysed reaction is (E)-4-coumaroyl-CoA + 3 malonyl-CoA + 3 H(+) = 2',4,4',6'-tetrahydroxychalcone + 3 CO2 + 4 CoA. It participates in secondary metabolite biosynthesis; flavonoid biosynthesis. In terms of biological role, the primary product of this enzyme is 4,2',4',6'-tetrahydroxychalcone (also termed naringenin-chalcone or chalcone) which can under specific conditions spontaneously isomerize into naringenin. This is Chalcone synthase 1 (CHS1) from Daucus carota (Wild carrot).